We begin with the raw amino-acid sequence, 121 residues long: NAD(P)H-quinone oxidoreductase subunit 3, chloroplastic (121 aa).

3 consecutive transmembrane segments (helical) span residues phenylalanine 10–phenylalanine 30, methionine 65–methionine 85, and leucine 90–valine 110.

This sequence belongs to the complex I subunit 3 family. NDH is composed of at least 16 different subunits, 5 of which are encoded in the nucleus.

Its subcellular location is the plastid. The protein localises to the chloroplast thylakoid membrane. The enzyme catalyses a plastoquinone + NADH + (n+1) H(+)(in) = a plastoquinol + NAD(+) + n H(+)(out). The catalysed reaction is a plastoquinone + NADPH + (n+1) H(+)(in) = a plastoquinol + NADP(+) + n H(+)(out). Functionally, NDH shuttles electrons from NAD(P)H:plastoquinone, via FMN and iron-sulfur (Fe-S) centers, to quinones in the photosynthetic chain and possibly in a chloroplast respiratory chain. The immediate electron acceptor for the enzyme in this species is believed to be plastoquinone. Couples the redox reaction to proton translocation, and thus conserves the redox energy in a proton gradient. The chain is NAD(P)H-quinone oxidoreductase subunit 3, chloroplastic from Physcomitrium patens (Spreading-leaved earth moss).